The chain runs to 463 residues: MSTNQIILTDQGNNYVNVWSHVAQDLYNHYGETLYNSWFSKVNFIESSLNTVILCAPTNFVRDWIKSKYSMVILQLFQHYNNTIKSIEIITKELPGTTQTVTELPTKTFADIGSSELNSENIFSTLDVRFTFDNFVVGAPNELAYAAARAVAESSGAVSESNPLFLYGGVGLGKTHLMHAIGWYIKQHNPSRKVIYMSAEKFMYQFVKALRNKEVISFKEKFRSVDVLMIDDIQFICGKDSTQEEFFHTFNTLIDNNRQMVISCDRSPSDLDNIEDRIKSRLGWGLVADVHSTTYELRLGILESKIEQMNVKIPKDVIDFLASKIVSNVRELEGALNKVIAHSNFTLKEITLENTQNILRDLLRSNERIITVEDIQKKVASRYNIKLSDMSSSRRLREVARPRQIAMYLSKALTPKSLADIGKKFGKKDHTTVMHAIKKVEELLENDIELREEIHLLMKILQN.

Residues 1 to 83 are domain I, interacts with DnaA modulators; the sequence is MSTNQIILTD…LQLFQHYNNT (83 aa). The interval 83–124 is domain II; the sequence is TIKSIEIITKELPGTTQTVTELPTKTFADIGSSELNSENIFS. The tract at residues 125–343 is domain III, AAA+ region; that stretch reads TLDVRFTFDN…GALNKVIAHS (219 aa). Positions 171, 173, 174, and 175 each coordinate ATP. Residues 344 to 463 form a domain IV, binds dsDNA region; the sequence is NFTLKEITLE…IHLLMKILQN (120 aa).

It belongs to the DnaA family. In terms of assembly, oligomerizes as a right-handed, spiral filament on DNA at oriC.

The protein localises to the cytoplasm. In terms of biological role, plays an essential role in the initiation and regulation of chromosomal replication. ATP-DnaA binds to the origin of replication (oriC) to initiate formation of the DNA replication initiation complex once per cell cycle. Binds the DnaA box (a 9 base pair repeat at the origin) and separates the double-stranded (ds)DNA. Forms a right-handed helical filament on oriC DNA; dsDNA binds to the exterior of the filament while single-stranded (ss)DNA is stabiized in the filament's interior. The ATP-DnaA-oriC complex binds and stabilizes one strand of the AT-rich DNA unwinding element (DUE), permitting loading of DNA polymerase. After initiation quickly degrades to an ADP-DnaA complex that is not apt for DNA replication. Binds acidic phospholipids. The protein is Chromosomal replication initiator protein DnaA of Rickettsia africae (strain ESF-5).